We begin with the raw amino-acid sequence, 79 residues long: uncharacterized protein (79 aa).

The signal sequence occupies residues 1–24 (MNKFLNLIGLAFVLVLCAFSCSNA). In terms of domain architecture, LysM spans 32-78 (SWHVAQKGYTCYDMATSCKVTLDQFMRTNKLDNNACKLVQIGRKYCC).

The protein resides in the secreted. This is an uncharacterized protein from Dictyostelium discoideum (Social amoeba).